The primary structure comprises 204 residues: Dephospho-CoA kinase (204 aa).

Residues 13–204 (RIGLTGGIAS…LWKNTIKKLV (192 aa)) form the DPCK domain. An ATP-binding site is contributed by 21-26 (ASGKST).

It belongs to the CoaE family.

The protein localises to the cytoplasm. It carries out the reaction 3'-dephospho-CoA + ATP = ADP + CoA + H(+). It participates in cofactor biosynthesis; coenzyme A biosynthesis; CoA from (R)-pantothenate: step 5/5. In terms of biological role, catalyzes the phosphorylation of the 3'-hydroxyl group of dephosphocoenzyme A to form coenzyme A. The chain is Dephospho-CoA kinase from Prochlorococcus marinus subsp. pastoris (strain CCMP1986 / NIES-2087 / MED4).